A 207-amino-acid chain; its full sequence is Uracil phosphoribosyltransferase (207 aa).

5-phospho-alpha-D-ribose 1-diphosphate-binding positions include arginine 77, arginine 102, and 129–137 (DPMLATGGS). Residues isoleucine 192 and 197 to 199 (GDA) contribute to the uracil site. Aspartate 198 serves as a coordination point for 5-phospho-alpha-D-ribose 1-diphosphate.

It belongs to the UPRTase family. The cofactor is Mg(2+).

The enzyme catalyses UMP + diphosphate = 5-phospho-alpha-D-ribose 1-diphosphate + uracil. The protein operates within pyrimidine metabolism; UMP biosynthesis via salvage pathway; UMP from uracil: step 1/1. With respect to regulation, allosterically activated by GTP. Catalyzes the conversion of uracil and 5-phospho-alpha-D-ribose 1-diphosphate (PRPP) to UMP and diphosphate. The protein is Uracil phosphoribosyltransferase of Dictyoglomus thermophilum (strain ATCC 35947 / DSM 3960 / H-6-12).